Here is a 435-residue protein sequence, read N- to C-terminus: Methionine aminopeptidase 2-2 (435 aa).

The disordered stretch occupies residues Met-1–Asn-92. The span at Asp-24–Ala-33 shows a compositional bias: low complexity. Over residues Gly-34–Asp-45 the composition is skewed to acidic residues. The segment covering Ala-59–Gly-73 has biased composition (basic residues). Residue His-197 participates in substrate binding. 3 residues coordinate a divalent metal cation: Asp-217, Asp-228, and His-297. His-305 contacts substrate. Glu-330 and Glu-425 together coordinate a divalent metal cation.

The protein belongs to the peptidase M24A family. Methionine aminopeptidase eukaryotic type 2 subfamily. Co(2+) serves as cofactor. It depends on Zn(2+) as a cofactor. The cofactor is Mn(2+). Requires Fe(2+) as cofactor.

Its subcellular location is the cytoplasm. The enzyme catalyses Release of N-terminal amino acids, preferentially methionine, from peptides and arylamides.. Its function is as follows. Cotranslationally removes the N-terminal methionine from nascent proteins. The N-terminal methionine is often cleaved when the second residue in the primary sequence is small and uncharged (Met-Ala-, Cys, Gly, Pro, Ser, Thr, or Val). The polypeptide is Methionine aminopeptidase 2-2 (Aspergillus clavatus (strain ATCC 1007 / CBS 513.65 / DSM 816 / NCTC 3887 / NRRL 1 / QM 1276 / 107)).